Consider the following 405-residue polypeptide: Dynactin subunit 2 (405 aa).

The interval 1–25 is disordered; sequence MADPKYADLPGIARNEPDVYETSDL. N-acetylalanine is present on Ala2. Tyr6 carries the post-translational modification Phosphotyrosine. Ser85 is modified (phosphoserine). At Tyr88 the chain carries Phosphotyrosine. Positions 105 to 132 form a coiled coil; the sequence is YQRLLHEVQELTTEVEKIKMTVKESATE. Thr136 bears the Phosphothreonine mark. The tract at residues 187 to 207 is disordered; it reads KNTKGAGSGGKTTSGSPPDSS. Ser324 is modified (phosphoserine).

It belongs to the dynactin subunit 2 family. Subunit of dynactin, a multiprotein complex part of a tripartite complex with dynein and a adapter, such as BICDL1, BICD2 or HOOK3. The dynactin complex is built around ACTR1A/ACTB filament and consists of an actin-related filament composed of a shoulder domain, a pointed end and a barbed end. Its length is defined by its flexible shoulder domain. The soulder is composed of 2 DCTN1 subunits, 4 DCTN2 and 2 DCTN3. The 4 DCNT2 (via N-terminus) bind the ACTR1A filament and act as molecular rulers to determine the length. The pointed end is important for binding dynein-dynactin cargo adapters and consists of 4 subunits: ACTR10, DCNT4, DCTN5 and DCTN6. The barbed end is composed of a CAPZA1:CAPZB heterodimers, which binds ACTR1A/ACTB filament and dynactin and stabilizes dynactin. Interacts with BICD2 and CEP135. Interacts with DYNAP. Interacts with ECPAS. Interacts with MAPRE1.

Its subcellular location is the cytoplasm. The protein localises to the cytoskeleton. It localises to the microtubule organizing center. The protein resides in the centrosome. It is found in the membrane. Its function is as follows. Part of the dynactin complex that activates the molecular motor dynein for ultra-processive transport along microtubules. In the dynactin soulder domain, binds the ACTR1A filament and acts as a molecular ruler to determine the length. Modulates cytoplasmic dynein binding to an organelle, and plays a role in prometaphase chromosome alignment and spindle organization during mitosis. Involved in anchoring microtubules to centrosomes. May play a role in synapse formation during brain development. The chain is Dynactin subunit 2 (DCTN2) from Sus scrofa (Pig).